Consider the following 1087-residue polypeptide: Platelet-derived growth factor receptor alpha (1087 aa).

Residues 1–23 form the signal peptide; sequence MGTPPRTFLILGCFLTGPLLTLC. Residues 24–528 are Extracellular-facing; that stretch reads QLPLPTIVPN…PTLRSELTVA (505 aa). 5 consecutive Ig-like C2-type domains span residues 26 to 104, 116 to 208, 213 to 312, 314 to 411, and 414 to 517; these read PLPT…YNHT, IYIY…IYIL, QLPV…VHDK, FIHL…SLLI, and PALI…LKLV. 4 N-linked (GlcNAc...) asparagine glycosylation sites follow: N44, N75, N88, and N102. The cysteines at positions 49 and 99 are disulfide-linked. Cystine bridges form between C149-C189 and C235-C290. 4 N-linked (GlcNAc...) asparagine glycosylation sites follow: N353, N359, N458, and N468. C435 and C501 are disulfide-bonded. The chain crosses the membrane as a helical span at residues 529–549; the sequence is AAVLVLLVIVIISLIVLVIIW. Residues 550 to 1087 are Cytoplasmic-facing; the sequence is KQKPRYEIRW…SSDLVEDSFL (538 aa). 2 positions are modified to phosphotyrosine; by autocatalysis: Y572 and Y574. In terms of domain architecture, Protein kinase spans 593 to 954; that stretch reads LVLGRILGSG…HLSEIVESLL (362 aa). Residues 599 to 607 and K627 contribute to the ATP site; that span reads LGSGAFGKV. 6 positions are modified to phosphotyrosine; by autocatalysis: Y720, Y731, Y742, Y754, Y762, and Y768. Catalysis depends on D818, which acts as the Proton acceptor. 2 positions are modified to phosphotyrosine; by autocatalysis: Y849 and Y988. A compositionally biased stretch (basic and acidic residues) spans 1000-1011; sequence KDRESGFDEQRL. Positions 1000–1059 are disordered; it reads KDRESGFDEQRLSADSGYITPLPDIDPVSEDELGKRNRHSSQTSEESAIETGSSSSTFIK. A Phosphotyrosine; by autocatalysis modification is found at Y1017. Polar residues predominate over residues 1039–1057; the sequence is SSQTSEESAIETGSSSSTF.

It belongs to the protein kinase superfamily. Tyr protein kinase family. CSF-1/PDGF receptor subfamily. In terms of assembly, interacts with homodimeric PDGFA, PDGFB and PDGFC, and with heterodimers formed by PDGFA and PDGFB. Monomer in the absence of bound ligand. Interaction with dimeric PDGFA, PDGFB and/or PDGFC leads to receptor dimerization, where both PDGFRA homodimers and heterodimers with PDGFRB are observed. Ubiquitinated, leading to its internalization and degradation. Post-translationally, autophosphorylated on tyrosine residues upon ligand binding. Autophosphorylation occurs in trans, i.e. one subunit of the dimeric receptor phosphorylates tyrosine residues on the other subunit.

It is found in the cell membrane. Its subcellular location is the cell projection. The protein resides in the cilium. The protein localises to the golgi apparatus. The catalysed reaction is L-tyrosyl-[protein] + ATP = O-phospho-L-tyrosyl-[protein] + ADP + H(+). Its activity is regulated as follows. Present in an inactive conformation in the absence of bound ligand. Binding of PDGFA and/or PDGFB leads to dimerization and activation by autophosphorylation on tyrosine residues. In terms of biological role, tyrosine-protein kinase that acts as a cell-surface receptor for PDGFA, PDGFB and PDGFC and plays an essential role in the regulation of embryonic development, cell proliferation, survival and chemotaxis. Depending on the context, promotes or inhibits cell proliferation and cell migration. Plays an important role in the differentiation of bone marrow-derived mesenchymal stem cells. Required for normal skeleton development. Required for normal development of the gastrointestinal tract. Plays a role in cell migration and chemotaxis in wound healing. Plays a role in platelet activation, secretion of agonists from platelet granules, and in thrombin-induced platelet aggregation. Binding of its cognate ligands - homodimeric PDGFA, homodimeric PDGFB, heterodimers formed by PDGFA and PDGFB or homodimeric PDGFC -leads to the activation of several signaling cascades; the response depends on the nature of the bound ligand and is modulated by the formation of heterodimers between PDGFRA and PDGFRB. Phosphorylates PIK3R1, PLCG1, and PTPN11. Activation of PLCG1 leads to the production of the cellular signaling molecules diacylglycerol and inositol 1,4,5-trisphosphate, mobilization of cytosolic Ca(2+) and the activation of protein kinase C. Phosphorylates PIK3R1, the regulatory subunit of phosphatidylinositol 3-kinase, and thereby mediates activation of the AKT1 signaling pathway. Mediates activation of HRAS and of the MAP kinases MAPK1/ERK2 and/or MAPK3/ERK1. Promotes activation of STAT family members STAT1, STAT3 and STAT5A and/or STAT5B. Receptor signaling is down-regulated by protein phosphatases that dephosphorylate the receptor and its down-stream effectors, and by rapid internalization of the activated receptor. This is Platelet-derived growth factor receptor alpha (PDGFRA) from Gallus gallus (Chicken).